A 126-amino-acid chain; its full sequence is Methylglyoxal synthase (126 aa).

An MGS-like domain is found at 1–126; the sequence is MKALALIAHD…IAWIRKGTPQ (126 aa). Substrate is bound by residues H9, K13, 35-38, and 55-56; these read TGTT and SG. D61 (proton donor/acceptor) is an active-site residue. Position 88 (H88) interacts with substrate.

This sequence belongs to the methylglyoxal synthase family.

It catalyses the reaction dihydroxyacetone phosphate = methylglyoxal + phosphate. Its function is as follows. Catalyzes the formation of methylglyoxal from dihydroxyacetone phosphate. This chain is Methylglyoxal synthase, found in Thermus thermophilus (strain ATCC BAA-163 / DSM 7039 / HB27).